The sequence spans 730 residues: Neuroligin-like protein glit-1 (730 aa).

Residues 1 to 18 form the signal peptide; it reads MFTGTIFNSLFTLPLVIS. Residues 19–663 are Extracellular-facing; the sequence is QFVPPPTRPV…EIMVFKWITG (645 aa). 7 N-linked (GlcNAc...) asparagine glycosylation sites follow: Asn103, Asn320, Asn445, Asn512, Asn557, Asn564, and Asn604. The chain crosses the membrane as a helical span at residues 664–684; sequence VNVIIIALLIVLAGAFGYMVW. Residues 685–730 are Cytoplasmic-facing; the sequence is GNKEDEEAAYKAENHQLVEYRDTGHSVSDATISSRTRSPRSRITNL.

The protein belongs to the type-B carboxylesterase/lipase family. In terms of tissue distribution, expressed in the pharynx, intestine, and in several cells in the head including dopaminergic neurons.

The protein localises to the cell membrane. In terms of biological role, probable neuronal cell surface protein thought to be involved in cell-cell-interactions. Confers protection against oxidative stress. Plays a role in protecting dopaminergic neurons against oxidative stress-induced neurodegeneration. This chain is Neuroligin-like protein glit-1, found in Caenorhabditis elegans.